Reading from the N-terminus, the 330-residue chain is Flotillin-like protein FloA (330 aa).

2 helical membrane passes run 5–25 (IILP…LFTF) and 28–48 (VALW…TLIG).

This sequence belongs to the flotillin-like FloA family. Homooligomerizes.

The protein localises to the cell membrane. Its subcellular location is the membrane raft. In terms of biological role, found in functional membrane microdomains (FMM) that may be equivalent to eukaryotic membrane rafts. FMMs are highly dynamic and increase in number as cells age. Flotillins are thought to be important factors in membrane fluidity. The polypeptide is Flotillin-like protein FloA (Oceanobacillus iheyensis (strain DSM 14371 / CIP 107618 / JCM 11309 / KCTC 3954 / HTE831)).